Consider the following 303-residue polypeptide: DCN1-like protein 3 (303 aa).

The disordered stretch occupies residues 1–40 (MGQCVTKCKNPSSTLGSKNGERESSKPHKRSSSHKEEHMS). Gly2 carries N-myristoyl glycine lipidation. The DCUN1 domain maps to 85–277 (SSLQRIEELF…LFDTFVEWEM (193 aa)).

As to quaternary structure, may interact (via the DCUN1 domain) with unneddylated cullins.

It localises to the cell membrane. The protein resides in the cytoplasm. Its subcellular location is the nucleus. The protein localises to the perinuclear region. Contributes to the neddylation of all cullins by transferring NEDD8 from N-terminally acetylated NEDD8-conjugating E2s enzyme to different cullin C-terminal domain-RBX complexes. At the cell membrane, can promote and as well inhibit cullins neddylation. The protein is DCN1-like protein 3 of Xenopus laevis (African clawed frog).